A 925-amino-acid chain; its full sequence is Isoleucine--tRNA ligase (925 aa).

Positions 57 to 67 (PYANGDIHMGH) match the 'HIGH' region motif. L-isoleucyl-5'-AMP is bound at residue Glu-556. A 'KMSKS' region motif is present at residues 597-601 (KMSKS). Lys-600 contacts ATP. Zn(2+)-binding residues include Cys-890, Cys-893, Cys-910, and Cys-913.

Belongs to the class-I aminoacyl-tRNA synthetase family. IleS type 1 subfamily. Monomer. It depends on Zn(2+) as a cofactor.

The protein localises to the cytoplasm. It carries out the reaction tRNA(Ile) + L-isoleucine + ATP = L-isoleucyl-tRNA(Ile) + AMP + diphosphate. In terms of biological role, catalyzes the attachment of isoleucine to tRNA(Ile). As IleRS can inadvertently accommodate and process structurally similar amino acids such as valine, to avoid such errors it has two additional distinct tRNA(Ile)-dependent editing activities. One activity is designated as 'pretransfer' editing and involves the hydrolysis of activated Val-AMP. The other activity is designated 'posttransfer' editing and involves deacylation of mischarged Val-tRNA(Ile). This Carboxydothermus hydrogenoformans (strain ATCC BAA-161 / DSM 6008 / Z-2901) protein is Isoleucine--tRNA ligase.